Here is a 457-residue protein sequence, read N- to C-terminus: Serine--tRNA ligase (457 aa).

Residue Thr-252–Glu-254 coordinates L-serine. Residues Arg-283–Glu-285 and Val-299 each bind ATP. Glu-306 lines the L-serine pocket. ATP is bound at residue Glu-370 to Ser-373. Thr-406 is an L-serine binding site.

This sequence belongs to the class-II aminoacyl-tRNA synthetase family. Type-1 seryl-tRNA synthetase subfamily. Homodimer. The tRNA molecule binds across the dimer.

Its subcellular location is the cytoplasm. The enzyme catalyses tRNA(Ser) + L-serine + ATP = L-seryl-tRNA(Ser) + AMP + diphosphate + H(+). It carries out the reaction tRNA(Sec) + L-serine + ATP = L-seryl-tRNA(Sec) + AMP + diphosphate + H(+). Its pathway is aminoacyl-tRNA biosynthesis; selenocysteinyl-tRNA(Sec) biosynthesis; L-seryl-tRNA(Sec) from L-serine and tRNA(Sec): step 1/1. Functionally, catalyzes the attachment of serine to tRNA(Ser). Is also able to aminoacylate tRNA(Sec) with serine, to form the misacylated tRNA L-seryl-tRNA(Sec), which will be further converted into selenocysteinyl-tRNA(Sec). The polypeptide is Serine--tRNA ligase (Saccharolobus solfataricus (strain ATCC 35092 / DSM 1617 / JCM 11322 / P2) (Sulfolobus solfataricus)).